Here is a 663-residue protein sequence, read N- to C-terminus: Leishmanolysin-like peptidase (663 aa).

Histidine 246 lines the Zn(2+) pocket. The active site involves glutamate 247. The Zn(2+) site is built by histidine 250 and histidine 353.

Belongs to the peptidase M8 family. Zn(2+) serves as cofactor.

It is found in the cytoplasm. Functionally, essential for the coordination of mitotic progression, and also plays a role in cell migration. The sequence is that of Leishmanolysin-like peptidase from Caenorhabditis elegans.